A 122-amino-acid chain; its full sequence is NADH-quinone oxidoreductase subunit A (122 aa).

3 helical membrane passes run 10 to 30 (MIVLIFLLLGILLPVVALTLG), 66 to 86 (IFALLFVIFDVETLFLYPWAV), and 91 to 111 (LGLFALIEMLIFVVMLLVGLA).

This sequence belongs to the complex I subunit 3 family. As to quaternary structure, NDH-1 is composed of 14 different subunits. Subunits NuoA, H, J, K, L, M, N constitute the membrane sector of the complex.

It localises to the cell membrane. The catalysed reaction is a quinone + NADH + 5 H(+)(in) = a quinol + NAD(+) + 4 H(+)(out). Its function is as follows. NDH-1 shuttles electrons from NADH, via FMN and iron-sulfur (Fe-S) centers, to quinones in the respiratory chain. The immediate electron acceptor for the enzyme in this species is believed to be a menaquinone. Couples the redox reaction to proton translocation (for every two electrons transferred, four hydrogen ions are translocated across the cytoplasmic membrane), and thus conserves the redox energy in a proton gradient. This is NADH-quinone oxidoreductase subunit A from Bacillus cereus (strain ATCC 14579 / DSM 31 / CCUG 7414 / JCM 2152 / NBRC 15305 / NCIMB 9373 / NCTC 2599 / NRRL B-3711).